The sequence spans 375 residues: 2-oxoglutarate synthase subunit KorA (375 aa).

As to quaternary structure, heterotetramer of the KorA, KorB, KorC and KorD subunits.

It catalyses the reaction 2 oxidized [2Fe-2S]-[ferredoxin] + 2-oxoglutarate + CoA = succinyl-CoA + 2 reduced [2Fe-2S]-[ferredoxin] + CO2 + H(+). This chain is 2-oxoglutarate synthase subunit KorA (korA), found in Methanothermobacter marburgensis (strain ATCC BAA-927 / DSM 2133 / JCM 14651 / NBRC 100331 / OCM 82 / Marburg) (Methanobacterium thermoautotrophicum).